Consider the following 903-residue polypeptide: Centrobin (903 aa).

Over residues 1–10 (MATSADSPSS) the composition is skewed to polar residues. Residues 1–34 (MATSADSPSSPLGAEDLLSDSSEPPGLNQVSSEV) form a disordered region. At Ser-80 the chain carries Phosphoserine. Disordered regions lie at residues 110–140 (LQTS…DSDS), 471–493 (LRQA…GQHQ), 568–597 (LSTT…KEER), 669–704 (SALG…LPPA), 772–799 (RVPE…DGLT), and 837–903 (SGTD…GVWR). Positions 196-560 (RRKHCERHIQ…ERLQAMLQAH (365 aa)) form a coiled coil. Residues 365-903 (QEHQLKEHYQ…SMRSRGGVWR (539 aa)) are required for centrosome localization. A compositionally biased stretch (pro residues) spans 572–590 (LPPPNPPAPPAGPSSPGPQ). The segment covering 675–685 (HPDHRAERPFP) has biased composition (basic and acidic residues). A compositionally biased stretch (low complexity) spans 778–791 (SSHSQGSGPSSGSP). Ser-790 is subject to Phosphoserine. The segment covering 837–863 (SGTDGRGDNVPRRNTDSRLGEIPRKEI) has biased composition (basic and acidic residues).

In terms of assembly, interacts with LYST. In terms of tissue distribution, widely expressed (at protein level). Highly expressed in testis. Also expressed in spleen, thymus, prostate, small intestine, colon and peripheral blood leukocytes.

Its subcellular location is the cytoplasm. It localises to the cytoskeleton. The protein localises to the microtubule organizing center. The protein resides in the centrosome. It is found in the centriole. In terms of biological role, required for centriole duplication. Inhibition of centriole duplication leading to defects in cytokinesis. This Homo sapiens (Human) protein is Centrobin (CNTROB).